The chain runs to 426 residues: tRNA(Ile)-lysidine synthase (426 aa).

21-26 provides a ligand contact to ATP; it reads SGGLDS.

This sequence belongs to the tRNA(Ile)-lysidine synthase family.

Its subcellular location is the cytoplasm. The enzyme catalyses cytidine(34) in tRNA(Ile2) + L-lysine + ATP = lysidine(34) in tRNA(Ile2) + AMP + diphosphate + H(+). Its function is as follows. Ligates lysine onto the cytidine present at position 34 of the AUA codon-specific tRNA(Ile) that contains the anticodon CAU, in an ATP-dependent manner. Cytidine is converted to lysidine, thus changing the amino acid specificity of the tRNA from methionine to isoleucine. This chain is tRNA(Ile)-lysidine synthase, found in Enterobacter sp. (strain 638).